The sequence spans 233 residues: Enolase-phosphatase E1 (233 aa).

Positions 16 and 18 each coordinate Mg(2+). Substrate contacts are provided by residues 131–132 (SS) and Lys167. Asp193 is a binding site for Mg(2+).

It belongs to the HAD-like hydrolase superfamily. MasA/MtnC family. Monomer. It depends on Mg(2+) as a cofactor.

The protein localises to the cytoplasm. Its subcellular location is the nucleus. The enzyme catalyses 5-methylsulfanyl-2,3-dioxopentyl phosphate + H2O = 1,2-dihydroxy-5-(methylsulfanyl)pent-1-en-3-one + phosphate. It functions in the pathway amino-acid biosynthesis; L-methionine biosynthesis via salvage pathway; L-methionine from S-methyl-5-thio-alpha-D-ribose 1-phosphate: step 3/6. Its pathway is amino-acid biosynthesis; L-methionine biosynthesis via salvage pathway; L-methionine from S-methyl-5-thio-alpha-D-ribose 1-phosphate: step 4/6. Bifunctional enzyme that catalyzes the enolization of 2,3-diketo-5-methylthiopentyl-1-phosphate (DK-MTP-1-P) into the intermediate 2-hydroxy-3-keto-5-methylthiopentenyl-1-phosphate (HK-MTPenyl-1-P), which is then dephosphorylated to form the acireductone 1,2-dihydroxy-3-keto-5-methylthiopentene (DHK-MTPene). In Meyerozyma guilliermondii (strain ATCC 6260 / CBS 566 / DSM 6381 / JCM 1539 / NBRC 10279 / NRRL Y-324) (Yeast), this protein is Enolase-phosphatase E1.